Consider the following 554-residue polypeptide: Glucose-6-phosphate isomerase (554 aa).

Residue Glu358 is the Proton donor of the active site. Catalysis depends on residues His389 and Lys515. A compositionally biased stretch (polar residues) spans 527–540 (SDGSPQRQSDSSTD). A disordered region spans residues 527-554 (SDGSPQRQSDSSTDALVRRYRTQRGRTG). Residues 544 to 554 (RRYRTQRGRTG) show a composition bias toward basic residues.

The protein belongs to the GPI family.

Its subcellular location is the cytoplasm. It carries out the reaction alpha-D-glucose 6-phosphate = beta-D-fructose 6-phosphate. It participates in carbohydrate biosynthesis; gluconeogenesis. Its pathway is carbohydrate degradation; glycolysis; D-glyceraldehyde 3-phosphate and glycerone phosphate from D-glucose: step 2/4. Catalyzes the reversible isomerization of glucose-6-phosphate to fructose-6-phosphate. In Mycobacterium ulcerans (strain Agy99), this protein is Glucose-6-phosphate isomerase.